We begin with the raw amino-acid sequence, 380 residues long: cAMP-dependent protein kinase type I-alpha regulatory subunit (380 aa).

At M1 the chain carries N-acetylmethionine. A2 is modified (N-acetylalanine; in cAMP-dependent protein kinase type I-alpha regulatory subunit, N-terminally processed). Residues 2-135 are dimerization and phosphorylation; it reads ASGSTASEEE…ALAKAIEKNV (134 aa). 3 positions are modified to phosphoserine: S3, S76, and S82. Residues 64-96 form a disordered region; that stretch reads IQNLQKASARADSREDEISPPPPNPVVKGRRRR. The Pseudophosphorylation motif signature appears at 95 to 99; the sequence is RRGAI. S100 is modified (phosphoserine). 3',5'-cyclic AMP contacts are provided by residues 136–253, E201, R210, 254–380, E325, and R334; these read LFSH…SKVS and ILES…SLSV. S257 carries the post-translational modification Phosphoserine.

This sequence belongs to the cAMP-dependent kinase regulatory chain family. In terms of assembly, the inactive holoenzyme is composed of two regulatory chains and two catalytic chains. Activation by cAMP releases the two active catalytic monomers and the regulatory dimer. Interacts with PRKACA and PRKACB. PRKAR1A also interacts with RFC2; the complex may be involved in cell survival. Interacts with AKAP4. Interacts with RARA; the interaction occurs in the presence of cAMP or FSH and regulates RARA transcriptional activity. Interacts with the phosphorylated form of PJA2. Interacts with CBFA2T3. Interacts with PRKX; regulates this cAMP-dependent protein kinase. Interacts with smAKAP; this interaction may target PRKAR1A to the plasma membrane. Interacts with AICDA. Post-translationally, the pseudophosphorylation site binds to the substrate-binding region of the catalytic chain, resulting in the inhibition of its activity. As to expression, four types of regulatory chains are found: I-alpha, I-beta, II-alpha, and II-beta. Their expression varies among tissues and is in some cases constitutive and in others inducible.

Its subcellular location is the cell membrane. Regulatory subunit of the cAMP-dependent protein kinases involved in cAMP signaling in cells. The chain is cAMP-dependent protein kinase type I-alpha regulatory subunit (PRKAR1A) from Sus scrofa (Pig).